Here is a 388-residue protein sequence, read N- to C-terminus: Succinate--CoA ligase [ADP-forming] subunit beta (388 aa).

Residues 9–244 (KQLFQKYGVP…LDEEDPFEIE (236 aa)) form the ATP-grasp domain. ATP contacts are provided by residues lysine 46, 53–55 (GRG), glutamate 99, leucine 102, and glutamate 107. Residues asparagine 199 and aspartate 213 each contribute to the Mg(2+) site. Substrate-binding positions include asparagine 265 and 322–324 (GIL).

This sequence belongs to the succinate/malate CoA ligase beta subunit family. In terms of assembly, heterotetramer of two alpha and two beta subunits. Mg(2+) is required as a cofactor.

The enzyme catalyses succinate + ATP + CoA = succinyl-CoA + ADP + phosphate. The catalysed reaction is GTP + succinate + CoA = succinyl-CoA + GDP + phosphate. The protein operates within carbohydrate metabolism; tricarboxylic acid cycle; succinate from succinyl-CoA (ligase route): step 1/1. Succinyl-CoA synthetase functions in the citric acid cycle (TCA), coupling the hydrolysis of succinyl-CoA to the synthesis of either ATP or GTP and thus represents the only step of substrate-level phosphorylation in the TCA. The beta subunit provides nucleotide specificity of the enzyme and binds the substrate succinate, while the binding sites for coenzyme A and phosphate are found in the alpha subunit. The chain is Succinate--CoA ligase [ADP-forming] subunit beta from Syntrophobacter fumaroxidans (strain DSM 10017 / MPOB).